Consider the following 370-residue polypeptide: Cobalt-precorrin-5B C(1)-methyltransferase (370 aa).

It belongs to the CbiD family.

It catalyses the reaction Co-precorrin-5B + S-adenosyl-L-methionine = Co-precorrin-6A + S-adenosyl-L-homocysteine. It functions in the pathway cofactor biosynthesis; adenosylcobalamin biosynthesis; cob(II)yrinate a,c-diamide from sirohydrochlorin (anaerobic route): step 6/10. Functionally, catalyzes the methylation of C-1 in cobalt-precorrin-5B to form cobalt-precorrin-6A. In Nostoc sp. (strain PCC 7120 / SAG 25.82 / UTEX 2576), this protein is Cobalt-precorrin-5B C(1)-methyltransferase.